A 243-amino-acid polypeptide reads, in one-letter code: MNSQSSRNETAATAVNGSDSAAASRDHKSGGGVLKRLKSRRNQVDRRPVTEEELRALGRDITPDEVLGLRAVARDYLCKLEDNIYNIDFTRFKIRDLETGTVLFEIAKPPHCDLDEEDDENRDADTSAGRFVRYQFTPAFLKLRTVGATVEFTVGDQPVTNFRMIERHYFQDRLLKSFDFDFGFCIPNSRNTCEHIYEFPQLPEDLIRLMIEHPYETRSDSFYFVDNKLIMHNKADYAYNGGQ.

Positions 1 to 21 are enriched in polar residues; sequence MNSQSSRNETAATAVNGSDSA. The segment at 1 to 49 is disordered; that stretch reads MNSQSSRNETAATAVNGSDSAAASRDHKSGGGVLKRLKSRRNQVDRRPV. Tyrosine 134 is a binding site for tetradecanoate.

It belongs to the PDE6D/unc-119 family. Detected in embryo. Detected in larvae four days after fertilization, in retina and neural tissues (at protein level). Detected in embryos at the sphere stage, during gastrulation, somitogenesis and in swimming larvae, both within and outside of the developing nervous system. Detected in adults.

Its subcellular location is the cell projection. It localises to the cilium. Myristoyl-binding protein that acts as a cargo adapter: specifically binds the myristoyl moiety of a subset of N-terminally myristoylated proteins and is required for their localization. Plays a key role in localization of proteins to the primary cilium membrane. This Danio rerio (Zebrafish) protein is Protein unc-119 homolog B (unc119b).